The chain runs to 500 residues: Nitrate/nitrite transporter NrtP (500 aa).

The next 12 membrane-spanning stretches (helical) occupy residues 19–39 (WFAF…ATTI), 52–72 (TLGI…GMLL), 79–99 (ITYS…ALAQ), 109–129 (LLMG…AEWF), 147–167 (FGAF…SFFS), 175–195 (LAIA…YNTV), 220–240 (SFWA…LLAW), 247–267 (IHFL…GLFA), 364–384 (WTMT…HFIN), 389–409 (IPVA…GCGA), 425–445 (IAGN…TIFS), and 451–471 (TLFS…AFFL).

This sequence belongs to the major facilitator superfamily. Nitrate/nitrite porter (TC 2.A.1.8) family.

The protein localises to the cell inner membrane. Its function is as follows. Transport system for both nitrate and nitrite, with much higher affinity for nitrate than for nitrite. The polypeptide is Nitrate/nitrite transporter NrtP (Nostoc punctiforme (strain ATCC 29133 / PCC 73102)).